We begin with the raw amino-acid sequence, 202 residues long: Cytochrome c oxidase assembly protein CtaG (202 aa).

Residues 1–14 are Cytoplasmic-facing; that stretch reads MSDKAAAPRKQGRN. Residues 15–37 form a helical; Signal-anchor for type II membrane protein membrane-spanning segment; it reads NGAVVMMCLSFVFGMGAMSYAAV. Topologically, residues 38 to 202 are periplasmic; that stretch reads PLYRIFCQVT…GGTVKIEKKL (165 aa).

This sequence belongs to the COX11/CtaG family.

The protein localises to the cell inner membrane. Its function is as follows. Exerts its effect at some terminal stage of cytochrome c oxidase synthesis, probably by being involved in the insertion of the copper B into subunit I. The chain is Cytochrome c oxidase assembly protein CtaG from Rhizobium etli (strain ATCC 51251 / DSM 11541 / JCM 21823 / NBRC 15573 / CFN 42).